We begin with the raw amino-acid sequence, 763 residues long: Phosphoglycerol transferase I (763 aa).

Transmembrane regions (helical) follow at residues Met-1–Ala-21, Trp-26–Tyr-46, Ile-77–Ile-97, and Val-108–Phe-128.

The protein belongs to the OpgB family.

Its subcellular location is the cell inner membrane. It catalyses the reaction a phosphatidylglycerol + a membrane-derived-oligosaccharide D-glucose = a 1,2-diacyl-sn-glycerol + a membrane-derived-oligosaccharide 6-(glycerophospho)-D-glucose.. The protein operates within glycan metabolism; osmoregulated periplasmic glucan (OPG) biosynthesis. In terms of biological role, transfers a phosphoglycerol residue from phosphatidylglycerol to the membrane-bound nascent glucan backbones. The polypeptide is Phosphoglycerol transferase I (Salmonella newport (strain SL254)).